The following is a 166-amino-acid chain: Large ribosomal subunit protein mL49 (166 aa).

Belongs to the mitochondrion-specific ribosomal protein mL49 family. In terms of assembly, component of the mitochondrial ribosome large subunit (39S) which comprises a 16S rRNA and about 50 distinct proteins. Interacts with OXA1L.

The protein localises to the mitochondrion. The polypeptide is Large ribosomal subunit protein mL49 (MRPL49) (Bos taurus (Bovine)).